Consider the following 67-residue polypeptide: Large ribosomal subunit protein bL35 (67 aa).

It belongs to the bacterial ribosomal protein bL35 family.

The polypeptide is Large ribosomal subunit protein bL35 (Bartonella henselae (strain ATCC 49882 / DSM 28221 / CCUG 30454 / Houston 1) (Rochalimaea henselae)).